A 295-amino-acid polypeptide reads, in one-letter code: Signal-transducing adaptor protein 1 (295 aa).

A PH domain is found at 25–121; sequence PLYFEGFLLI…WRGFILTVTE (97 aa). Y168 is modified (phosphotyrosine). One can recognise an SH2 domain in the interval 177–280; it reads ACFYTVSRKE…TDENTGQEPS (104 aa). The tract at residues 270-295 is disordered; the sequence is STDENTGQEPSMEGRSEKLKKNPHIA.

As to quaternary structure, interacts with KIT and CSF1R. Interacts with URI1; the interaction is phosphorylation-dependent and occurs in a growth-dependent manner. Phosphorylated on tyrosine by TEC. Phosphorylated on tyrosine by KIT.

It is found in the nucleus. The protein resides in the cytoplasm. It localises to the mitochondrion. In terms of biological role, in BCR signaling, appears to function as a docking protein acting downstream of TEC and participates in a positive feedback loop by increasing the activity of TEC. This Homo sapiens (Human) protein is Signal-transducing adaptor protein 1 (STAP1).